Reading from the N-terminus, the 505-residue chain is Putative F-box protein At1g58310 (505 aa).

Positions 7–55 (RDIISGLPDSLLCHILSFLNTKEAASTSVLAKKWRYLFASVPNLDFDDS) constitute an F-box domain.

This Arabidopsis thaliana (Mouse-ear cress) protein is Putative F-box protein At1g58310.